The following is a 283-amino-acid chain: MPVSRYAVFGHPVAHSLSPAIHADFGKQTGIVLDYTAIDAPPEDFSAALQRFADGGGKGANVTLPLKEAACALASSLSDRARLAGAVNTLVRHEGQWQGENTDGIGLVRDLTDRHGLDLRGRRVLLLGAGGAARGVAPALLQAGITEMVVVNRSPERADALCDTLGEPGRVVSRYIEDLRDLGDFELIVNATAAGRDRDAGAFAMPLGLVNSLTAAVDLNYGATAIAFLAWARSAQCRYAIDGLGMLVEQAAESFALWHGVRPDTDPVYAALRAREAVLVSAD.

Residues 16–18 and threonine 63 contribute to the shikimate site; that span reads SLS. Residue lysine 67 is the Proton acceptor of the active site. Residue aspartate 79 coordinates NADP(+). Shikimate is bound by residues asparagine 88 and aspartate 103. Residues 128 to 132, alanine 223, and glycine 243 contribute to the NADP(+) site; that span reads GAGGA.

The protein belongs to the shikimate dehydrogenase family. In terms of assembly, homodimer.

It carries out the reaction shikimate + NADP(+) = 3-dehydroshikimate + NADPH + H(+). It functions in the pathway metabolic intermediate biosynthesis; chorismate biosynthesis; chorismate from D-erythrose 4-phosphate and phosphoenolpyruvate: step 4/7. Involved in the biosynthesis of the chorismate, which leads to the biosynthesis of aromatic amino acids. Catalyzes the reversible NADPH linked reduction of 3-dehydroshikimate (DHSA) to yield shikimate (SA). The chain is Shikimate dehydrogenase (NADP(+)) from Xanthomonas oryzae pv. oryzae (strain MAFF 311018).